The chain runs to 382 residues: Putative acetyl-CoA C-acetyltransferase VraB (382 aa).

The active-site Acyl-thioester intermediate is the cysteine 86. Histidine 338 functions as the Proton acceptor in the catalytic mechanism.

This sequence belongs to the thiolase-like superfamily. Thiolase family.

This Staphylococcus epidermidis (strain ATCC 35984 / DSM 28319 / BCRC 17069 / CCUG 31568 / BM 3577 / RP62A) protein is Putative acetyl-CoA C-acetyltransferase VraB (vraB).